Consider the following 545-residue polypeptide: DNA mismatch repair protein MutL (545 aa).

The segment at 516–545 (GRRSGARGGGEARPRPQEESFPEAPLPREP) is disordered.

The protein belongs to the DNA mismatch repair MutL/HexB family.

Functionally, this protein is involved in the repair of mismatches in DNA. It is required for dam-dependent methyl-directed DNA mismatch repair. May act as a 'molecular matchmaker', a protein that promotes the formation of a stable complex between two or more DNA-binding proteins in an ATP-dependent manner without itself being part of a final effector complex. This chain is DNA mismatch repair protein MutL, found in Thermus thermophilus (strain ATCC BAA-163 / DSM 7039 / HB27).